We begin with the raw amino-acid sequence, 416 residues long: Phosphatidylinositol 5-phosphate 4-kinase type-2 gamma (416 aa).

The PIPK domain maps to 38 to 415 (ASDPMLSVFM…RFREFISNIF (378 aa)).

In terms of processing, phosphorylated, phosphorylation is induced by EGF.

It is found in the endoplasmic reticulum. Its subcellular location is the cytoplasm. It catalyses the reaction a 1,2-diacyl-sn-glycero-3-phospho-(1D-myo-inositol-5-phosphate) + ATP = a 1,2-diacyl-sn-glycero-3-phospho-(1D-myo-inositol-4,5-bisphosphate) + ADP + H(+). The catalysed reaction is 1,2-dihexadecanoyl-sn-glycero-3-phospho-(1D-myo-inositol-5-phosphate) + ATP = 1,2-dihexadecanoyl-sn-glycero-3-phospho-(1D-myo-inositol-4,5-bisphosphate) + ADP + H(+). The enzyme catalyses 1,2-dihexadecanoyl-sn-glycero-3-phospho-(1D-myo-inositol-5-phosphate) + GTP = 1,2-dihexadecanoyl-sn-glycero-3-phospho-(1D-myo-inositol-4,5-bisphosphate) + GDP + H(+). Phosphatidylinositol 5-phosphate 4-kinase with low enzymatic activity. May be a GTP sensor, has higher GTP-dependent kinase activity than ATP-dependent kinase activity. In Danio rerio (Zebrafish), this protein is Phosphatidylinositol 5-phosphate 4-kinase type-2 gamma (pip4k2c).